Consider the following 134-residue polypeptide: Profilin-2 (134 aa).

C13 and C118 form a disulfide bridge. Positions 84 to 100 match the Involved in PIP2 interaction motif; that stretch reads AVIRGKKGSGGITIKKT. Position 114 is a phosphothreonine (T114).

It belongs to the profilin family. In terms of assembly, occurs in many kinds of cells as a complex with monomeric actin in a 1:1 ratio. In terms of processing, phosphorylated by MAP kinases.

The protein localises to the cytoplasm. It localises to the cytoskeleton. Binds to actin and affects the structure of the cytoskeleton. At high concentrations, profilin prevents the polymerization of actin, whereas it enhances it at low concentrations. The sequence is that of Profilin-2 from Olea europaea (Common olive).